Here is a 124-residue protein sequence, read N- to C-terminus: UPF0342 protein DSY2926 (124 aa).

It belongs to the UPF0342 family.

The sequence is that of UPF0342 protein DSY2926 from Desulfitobacterium hafniense (strain Y51).